Consider the following 2207-residue polypeptide: MDMQVPSVCLLVPPPNPLAISLASKNSQYYEAILSVWNQLYINVKSMISWQYCLLDIGRINSLTMSMLSKMGPDESNNILRSLEMHFQEFKRHSQGSELFGAEDQKLIENQFAGAQQHFDKLVVDLPTYAARGEGSEYSAAVSVKMLNELNALRLKLDGAESSLISFLYIALGDDGLEECGQHISSTQAFQKNIQGLRGEFVSLRDGIQAELKDAGNSDKGRYLSGQLDIMNQRLLNLDNYFTTHLQRLDSVKSLLKDMMKAEDVVKVYEARLTEKETASSDPEEVQRYQKVLLSMRSDLEQKQDLLNSLVVDLNQMQKVNDQRDQGRYQCIINLTQYADHVHQLSDRWKRIHVQINNRLVDLDSYLPQLKRYMQSSSQLSGWIDETQKQIDSQHSVKMEDSAAYTQLLNQQKALNSDIKAKRELMETVHKDGETCISAIKNYELELATYSAGLETLLNIPIKRTVLQSPSSSIAEEVSSLNAHYLELLTRSSDYYKLLLASQKNMEELKIRNTRIELLEEELEQLRDAIKDQTANNASLQDALLQYQQELNNSQSHLLSLEEVKRTETMKCMATQESLDSSKDRLEELTEEVRRLKLQLEDMERKKKIVEERYTFLQEEHDETMRKKLKELEQASWAKMELEKTVSERNRELERLRKELEDEARRIKEAQTELAKVRQEHSTEIREVKQTYESQILVAQSSMQKLSQEKESDSAAMSLEFERLEGESSELKEQLKRLRISLSQEEAQRRILEEEVKRLTALNTEESRKRHELESQIQVMMSQKREGDNKMREVQESSSRTLQDKINEINRLTRNFEEERRLKRSLETDKRRLEGDLAVLKSKNETTNEELVQLRSSHRELSLIRVELEAHALEKGRSEQTIARLQARIQELQEELKRLEGELEKQRQVAEEEAGKRRRTESQLEKSSQAMREYTTTITTLRTSQEETNIGAKHADEKCKQLQEALDRASKENKVTSQNLAALKAEINTLKLQLTQEQGRVQDSNQRYEALHRSMEEKSCALNVSSGETERLQRLTETLTKDRQRVEEELRAVRLEHEELLKNKKRGDREMTEQITALQKQLDSSQRAGAEHDRLMRQLSREREKLQVEIENVQKQARETSSVIQTSQSQCSSLSQERDDLLKKITTMEQEIVRLKRLEDELARIKLSLESELRFKSQLQEENNKIKKDFTQWKTKCASHEEQLRQHASERSGLESQFSSVRTELERLRTQLREAEERYRLLLQNFEQERTEMQALRDSKQELLRLQQKPDGATKYTQTDQTDPSSLVFEGVRKNITAQQLQDCGVIDKVIFEQLMTGKRTVQDVSVDIRLNLKGTGAIAGLAAGPKGKMTFTEAKKQNLISDKSGNMLLEAQAATGYIIDPQANTKMTVEEACLNGVVDEADKKQLLIAEAACVGFRDPKTAKLLPVSQAMKKGIIDRETTLRLLQAQEAAGGILDPILSVYLPKDTAMDRDLVDEDLYQALNAKPDCYIDPDTDLRASYVTLKKQCKADLNTGLLLLPAPEKPITVQGLRSEVNVSDLVDAKLLEPSDMNHLREGKITSQEIEHRLRAYLRGSTCIAGIYDEAGECTLPIYQAMKNGLLRPGTTLELLEAQAASGFVIDPINNEYYTVEEACQKGLVGVEFKDKLLSAEKAVTGYKEPGTNKLISLFEAIERGLIEKGHGIRLLEAQIASGGIIDPKHSHRIDVDVAYQRGYFDQGMNQILKDEGDDTKGFFDPNTEDNLTYLELKSRCTIDKKTGLVLLPIHDKKKAQQKNSTRKRRVLIVDPDSNKEMTVREAYEKKLIDYETFLELSQQECEWEETTITAPDGSTSTAIMDMQTGIQYNLKELLAQGVIDQDVFNKYRSGGISVTELAGMITKKTKMLTNPVSSSSSSSLSSSSSSFTSQTTTKSQIVKTETIKSIESTSEYLQQDQSSANSSKHISSMSVKLSPLVESIEEQNPVGAIFDTEKLEKITVCDALKRGMIDSITAQRLLEAQACTGGIVSPDNGRRMSIQEATRVGVLDDEMANRIKPAQKAYIGFEDVKTKRKMSAAEAVKEKWLPYEAGQRFLEFQYLTGGLFDPELGCRRSLEEALQMGWLDMRAAQRLQDTRHHPKTLTCPKTKLRISYKEAMEACMNEENTGVRMLPAATVSSRGISSPYNLSNPGSASGSRSGSRRGSVDYSLSPSSSSRYSSFSYSRTSFSSRSLS.

Coiled coils occupy residues 506–916 (MEEL…EAGK), 952–1000 (AKHA…EQGR), and 1029–1063 (TERLQRLTETLTKDRQRVEEELRAVRLEHEELLKN). Basic and acidic residues predominate over residues 905–924 (KQRQVAEEEAGKRRRTESQL). Residues 905 to 933 (KQRQVAEEEAGKRRRTESQLEKSSQAMRE) are disordered. Plectin repeat units follow at residues 1369 to 1406 (LLEAQAATGYIIDPQANTKMTVEEACLNGVVDEADKKQ), 1407 to 1445 (LLIAEAACVGFRDPKTAKLLPVSQAMKKGIIDRETTLRL), 1446 to 1483 (LQAQEAAGGILDPILSVYLPKDTAMDRDLVDEDLYQAL), 1571 to 1609 (YLRGSTCIAGIYDEAGECTLPIYQAMKNGLLRPGTTLEL), 1610 to 1647 (LEAQAASGFVIDPINNEYYTVEEACQKGLVGVEFKDKL), 1685 to 1723 (LLEAQIASGGIIDPKHSHRIDVDVAYQRGYFDQGMNQIL), 1783 to 1811 (IVDPDSNKEMTVREAYEKKLIDYETFLEL), 1992 to 2029 (LLEAQACTGGIVSPDNGRRMSIQEATRVGVLDDEMANR), and 2068 to 2106 (FLEFQYLTGGLFDPELGCRRSLEEALQMGWLDMRAAQRL). The segment covering 2155–2164 (ISSPYNLSNP) has biased composition (polar residues). The tract at residues 2155 to 2207 (ISSPYNLSNPGSASGSRSGSRRGSVDYSLSPSSSSRYSSFSYSRTSFSSRSLS) is disordered. A compositionally biased stretch (low complexity) spans 2165 to 2207 (GSASGSRSGSRRGSVDYSLSPSSSSRYSSFSYSRTSFSSRSLS).

This sequence belongs to the plakin or cytolinker family.

It is found in the cell junction. The protein resides in the desmosome. The protein localises to the cell membrane. In terms of biological role, involved in the organization of desmosome cell-cell junctions. Of particular importance in cell adhesion in the skin and during cardiac development. May also play a role in the regulation of Wnt, TGF-beta and Hippo signaling pathways. This Danio rerio (Zebrafish) protein is Desmoplakin-B.